Here is a 131-residue protein sequence, read N- to C-terminus: Cytochrome c-552 (131 aa).

Positions 11, 14, 15, and 69 each coordinate heme c.

Binds 1 heme c group covalently per subunit.

Functionally, this monoheme basic protein appears to function as an electron donor to cytochrome oxidase in T.thermophilus. This chain is Cytochrome c-552 (cycA), found in Thermus thermophilus.